A 515-amino-acid polypeptide reads, in one-letter code: Protein FAM98A (515 aa).

2 disordered regions span residues 297–411 (VLMG…YHGG) and 432–515 (SGYQ…HYTS). Positions 302–311 (VPDRGGRPNE) are enriched in basic and acidic residues. Gly residues predominate over residues 382–395 (WTDGGSASGGGYQD). Basic and acidic residues predominate over residues 444 to 456 (RYQDGGHHGERGS). A compositionally biased stretch (gly residues) spans 457-481 (GRGGRGGRGGRGGRGSQGGGWGGRG). The segment covering 485–501 (YHQGGQFEQHFQHGGYQ) has biased composition (low complexity). Positions 502–515 (YSHSGFGQGRHYTS) are enriched in polar residues.

Belongs to the FAM98 family. As to quaternary structure, interacts (via N- and C-terminus) with DDX1. Interacts (via N- and C-terminus) with C14orf166. Interacts with FAM98B. Interacts with PLEKHM1 (via N- and C-terminus).

Its function is as follows. Positively stimulates PRMT1-induced protein arginine methylation. Involved in skeletal homeostasis. Positively regulates lysosome peripheral distribution and ruffled border formation in osteoclasts. This chain is Protein FAM98A, found in Rattus norvegicus (Rat).